The sequence spans 76 residues: Acyl carrier protein (76 aa).

Positions 2 to 76 (SDIAERVKKI…QAIDYIQSHT (75 aa)) constitute a Carrier domain. Residue Ser-36 is modified to O-(pantetheine 4'-phosphoryl)serine.

Belongs to the acyl carrier protein (ACP) family. Post-translationally, 4'-phosphopantetheine is transferred from CoA to a specific serine of apo-ACP by AcpS. This modification is essential for activity because fatty acids are bound in thioester linkage to the sulfhydryl of the prosthetic group.

The protein localises to the cytoplasm. Its pathway is lipid metabolism; fatty acid biosynthesis. Functionally, carrier of the growing fatty acid chain in fatty acid biosynthesis. This is Acyl carrier protein from Methylococcus capsulatus (strain ATCC 33009 / NCIMB 11132 / Bath).